The following is a 79-amino-acid chain: Spidroin-1 (79 aa).

Belongs to the silk fibroin family. As to quaternary structure, major subunit, with spidroin 2, of the dragline silk.

Its subcellular location is the secreted. It is found in the extracellular space. In terms of biological role, spiders' major ampullate silk possesses unique characteristics of strength and elasticity. Fibroin consists of pseudocrystalline regions of antiparallel beta-sheet interspersed with elastic amorphous segments. This chain is Spidroin-1, found in Araneus bicentenarius (Giant lichen orbweaver).